A 176-amino-acid polypeptide reads, in one-letter code: Natural cytotoxicity triggering receptor 3 (176 aa).

An N-terminal signal peptide occupies residues 1-18 (MAWMLLLILIMVYPGSCA). In terms of domain architecture, Ig-like spans 19–126 (LWVSQPPEIR…VGTGNGTRLV (108 aa)). The Extracellular portion of the chain corresponds to 19 to 135 (LWVSQPPEIR…VVEKEYPQLG (117 aa)). The cysteines at positions 39 and 108 are disulfide-linked. Asn-42 and Asn-121 each carry an N-linked (GlcNAc...) asparagine glycan. Residues 136–156 (AGTVLLLRAGFYAVSFLSVAV) form a helical membrane-spanning segment. Topologically, residues 157-176 (GSTLYYQGKCHCHMGTHCHS) are cytoplasmic.

The protein belongs to the natural cytotoxicity receptor (NCR) family. Homodimer in the unliganted form. Interacts with CD3Z. Interacts with and is activated by binding to NCR3LG1. Interacts with and is activated by binding to BAG6. Interacts with and is inhibited by binding to LGALS3.

It is found in the cell membrane. In terms of biological role, cell membrane receptor of natural killer/NK cells that is activated by binding of extracellular ligands including BAG6 and NCR3LG1. Stimulates NK cells cytotoxicity toward neighboring cells producing these ligands. It controls, for instance, NK cells cytotoxicity against tumor cells. Engagement of NCR3 by BAG6 also promotes myeloid dendritic cells (DC) maturation, both through killing DCs that did not acquire a mature phenotype, and inducing the release by NK cells of TNFA and IFNG that promote DC maturation. The chain is Natural cytotoxicity triggering receptor 3 (NCR3) from Macaca fascicularis (Crab-eating macaque).